Reading from the N-terminus, the 357-residue chain is MQQIQVNLGDRSYPIHIGLDLLKQQQTFQSLQSKKVFIVTNDVVAPLYLTQVKAALADCASVDVFVLPDGEKNKDLAHLEQIFSALLEKNYARDTTLLALGGGVIGDMTGFAAACYQRGVPFVQVPTTLLAQVDSSVGGKTAVNHPLGKNMIGAFYQPQCVIIDTQCLHSLPKAEFDAGMAEVIKYGIIWDAEFFLWLENNIAALKALDTQALTYAIAKCCAIKADIVSQDETEQGVRALLNLGHTFGHAIEAQMGYGNWLHGQAVAAGSVLAAKTALALGLLDALSVQRIENLFRAFDLPIDGPQSMAFSDYMRHMRRDKKVLASKIRLILPQAIGQAGIYSDVDEALLAQVINPS.

Residues 69 to 74, 103 to 107, 127 to 128, Lys-140, and Lys-149 each bind NAD(+); these read DGEKNK, GVIGD, and TT. 3 residues coordinate Zn(2+): Glu-182, His-245, and His-262.

It belongs to the sugar phosphate cyclases superfamily. Dehydroquinate synthase family. Co(2+) is required as a cofactor. Zn(2+) serves as cofactor. It depends on NAD(+) as a cofactor.

The protein resides in the cytoplasm. It carries out the reaction 7-phospho-2-dehydro-3-deoxy-D-arabino-heptonate = 3-dehydroquinate + phosphate. It functions in the pathway metabolic intermediate biosynthesis; chorismate biosynthesis; chorismate from D-erythrose 4-phosphate and phosphoenolpyruvate: step 2/7. Its function is as follows. Catalyzes the conversion of 3-deoxy-D-arabino-heptulosonate 7-phosphate (DAHP) to dehydroquinate (DHQ). This Shewanella denitrificans (strain OS217 / ATCC BAA-1090 / DSM 15013) protein is 3-dehydroquinate synthase.